The chain runs to 178 residues: Inner membrane-spanning protein YciB (178 aa).

The next 5 membrane-spanning stretches (helical) occupy residues 12 to 32 (LFFA…VAIV), 50 to 70 (PMQW…LVLH), 74 to 94 (FIMW…LISD), 120 to 140 (LTFA…FVAF), and 145 to 165 (AVWV…FVLA).

Belongs to the YciB family.

It is found in the cell inner membrane. Plays a role in cell envelope biogenesis, maintenance of cell envelope integrity and membrane homeostasis. The chain is Inner membrane-spanning protein YciB from Laribacter hongkongensis (strain HLHK9).